The sequence spans 57 residues: Granulin-1 (57 aa).

Disulfide bonds link C4–C16 and C10–C26.

It belongs to the granulin family. Post-translationally, granulins are disulfide bridged. Ubiquitous.

It is found in the secreted. Its function is as follows. Granulins have possible cytokine-like activity. They may play a role in inflammation, wound repair, and tissue remodeling. In Cyprinus carpio (Common carp), this protein is Granulin-1.